Consider the following 377-residue polypeptide: Molybdenum import ATP-binding protein ModC (377 aa).

One can recognise an ABC transporter domain in the interval 17–254; it reads ITGDEAIRAR…LDLPFAHDED (238 aa). Position 52–59 (52–59) interacts with ATP; that stretch reads GHSGSGKT. Positions 313-377 constitute a Mop domain; it reads DSSILNVLPA…AQVKGVALLR (65 aa).

The protein belongs to the ABC transporter superfamily. Molybdate importer (TC 3.A.1.8) family. The complex is composed of two ATP-binding proteins (ModC), two transmembrane proteins (ModB) and a solute-binding protein (ModA).

The protein localises to the cell inner membrane. It carries out the reaction molybdate(out) + ATP + H2O = molybdate(in) + ADP + phosphate + H(+). Functionally, part of the ABC transporter complex ModABC involved in molybdenum import. Responsible for energy coupling to the transport system. The protein is Molybdenum import ATP-binding protein ModC of Aromatoleum aromaticum (strain DSM 19018 / LMG 30748 / EbN1) (Azoarcus sp. (strain EbN1)).